We begin with the raw amino-acid sequence, 400 residues long: Probable tRNA pseudouridine synthase D (400 aa).

Asp-89 acts as the Nucleophile in catalysis. The TRUD domain maps to 162–357 (GVPNYYGLQR…AGGDRKPALL (196 aa)).

This sequence belongs to the pseudouridine synthase TruD family.

The catalysed reaction is uridine(13) in tRNA = pseudouridine(13) in tRNA. In terms of biological role, could be responsible for synthesis of pseudouridine from uracil-13 in transfer RNAs. The sequence is that of Probable tRNA pseudouridine synthase D from Methanopyrus kandleri (strain AV19 / DSM 6324 / JCM 9639 / NBRC 100938).